A 420-amino-acid polypeptide reads, in one-letter code: Tyrosine--tRNA ligase 2 (420 aa).

Tyr36 is an L-tyrosine binding site. The short motif at 41–50 (PTADSLHIGH) is the 'HIGH' region element. L-tyrosine-binding residues include Tyr171 and Gln175. The 'KMSKS' region signature appears at 231–235 (KFGKT). An ATP-binding site is contributed by Lys234. Residues 354–420 (LSLVDLLVTS…GKKKYFLLKY (67 aa)) form the S4 RNA-binding domain.

This sequence belongs to the class-I aminoacyl-tRNA synthetase family. TyrS type 1 subfamily. In terms of assembly, homodimer.

It is found in the cytoplasm. It carries out the reaction tRNA(Tyr) + L-tyrosine + ATP = L-tyrosyl-tRNA(Tyr) + AMP + diphosphate + H(+). In terms of biological role, catalyzes the attachment of tyrosine to tRNA(Tyr) in a two-step reaction: tyrosine is first activated by ATP to form Tyr-AMP and then transferred to the acceptor end of tRNA(Tyr). The polypeptide is Tyrosine--tRNA ligase 2 (Enterococcus faecalis (strain ATCC 700802 / V583)).